The chain runs to 541 residues: T-complex protein 1 subunit epsilon (541 aa).

Ala2 bears the N-acetylalanine mark. A Glycyl lysine isopeptide (Lys-Gly) (interchain with G-Cter in SUMO2) cross-link involves residue Lys20. Ser26 is modified (phosphoserine). Residue Gly53 participates in ADP binding. Gly53 lines the ATP pocket. Mg(2+) is bound at residue Asp104. 4 residues coordinate ADP: Gly105, Thr106, Thr107, and Ser175. Positions 106 and 107 each coordinate ATP. Residues Lys210, Lys214, Lys265, Lys275, and Lys279 each participate in a glycyl lysine isopeptide (Lys-Gly) (interchain with G-Cter in SUMO2) cross-link. A Phosphoserine modification is found at Ser346. Residue Lys392 forms a Glycyl lysine isopeptide (Lys-Gly) (interchain with G-Cter in SUMO2) linkage. Positions 422, 492, 508, and 513 each coordinate ADP. Gly422 lines the ATP pocket. Ser539 is modified (phosphoserine).

Belongs to the TCP-1 chaperonin family. As to quaternary structure, component of the chaperonin-containing T-complex (TRiC), a hexadecamer composed of two identical back-to-back stacked rings enclosing a protein folding chamber. Each ring is made up of eight different subunits: TCP1/CCT1, CCT2, CCT3, CCT4, CCT5, CCT6A/CCT6, CCT7, CCT8. Interacts with PACRG. Interacts with DNAAF4. Interacts with DLEC1. Interacts with SPMAP2. Post-translationally, ubiquitinated by the DCX(DCAF12) complex specifically recognizes the diglutamate (Glu-Glu) at the C-terminus, leading to its degradation.

It localises to the cytoplasm. Its subcellular location is the cytoskeleton. The protein localises to the microtubule organizing center. It is found in the centrosome. The enzyme catalyses ATP + H2O = ADP + phosphate + H(+). In terms of biological role, component of the chaperonin-containing T-complex (TRiC), a molecular chaperone complex that assists the folding of actin, tubulin and other proteins upon ATP hydrolysis. The TRiC complex mediates the folding of WRAP53/TCAB1, thereby regulating telomere maintenance. As part of the TRiC complex may play a role in the assembly of BBSome, a complex involved in ciliogenesis regulating transports vesicles to the cilia. In Homo sapiens (Human), this protein is T-complex protein 1 subunit epsilon (CCT5).